The sequence spans 224 residues: MNTQFKLIGFDLDGTLVNSLPDLALSVNSALAEFNLPQAPEELVLTWIGNGAPVLIARALDWAKKQTGKVLTETEVKQVTERFNFYYGENLCNVSRLYPNVKETLEILKEKGYVLAVVTNKPTRHVQPVLAAFGIDHLFSEMLGGQSLPAIKPHPAPLYYLCGKFGFEPRQVLFVGDSKNDIIAGHAAGCAVVGLTYGYNYNIPIRESNPDWVFDDFAQLLSIL.

Asp11 (nucleophile) is an active-site residue. Mg(2+) is bound by residues Asp11, Asp13, and Asp177.

Belongs to the HAD-like hydrolase superfamily. CbbY/CbbZ/Gph/YieH family. It depends on Mg(2+) as a cofactor.

The catalysed reaction is 2-phosphoglycolate + H2O = glycolate + phosphate. The protein operates within organic acid metabolism; glycolate biosynthesis; glycolate from 2-phosphoglycolate: step 1/1. Functionally, specifically catalyzes the dephosphorylation of 2-phosphoglycolate. Is involved in the dissimilation of the intracellular 2-phosphoglycolate formed during the DNA repair of 3'-phosphoglycolate ends, a major class of DNA lesions induced by oxidative stress. The protein is Phosphoglycolate phosphatase of Haemophilus influenzae (strain ATCC 51907 / DSM 11121 / KW20 / Rd).